Consider the following 335-residue polypeptide: Glucose-dependent insulinotropic receptor (335 aa).

The Extracellular segment spans residues 1–12 (MESSFSFGVILA). The helical transmembrane segment at 13-33 (VLASLIIATNTLVAVAVLLLI) threads the bilayer. The Cytoplasmic portion of the chain corresponds to 34 to 37 (HKND). The chain crosses the membrane as a helical span at residues 38–58 (GVSLCFTLNLAVADTLIGVAI). Residues 59–81 (SGLLTDQLSSPSRPTQKTLCSLR) lie on the Extracellular side of the membrane. Residues 82-102 (MAFVTSSAAASVLTVMLITFD) form a helical membrane-spanning segment. Topologically, residues 103–125 (RYLAIKQPFRYLKIMSGFVAGAC) are cytoplasmic. A helical membrane pass occupies residues 126–146 (IAGLWLVSYLIGFLPLGIPMF). Residues 147 to 164 (QQTAYKGQCSFFAVFHPH) are Extracellular-facing. Residues 165–185 (FVLTLSCVGFFPAMLLFVFFY) form a helical membrane-spanning segment. Residues 186–226 (CDMLKIASMHSQQIRKMEHAGAMAGGYRSPRTPSDFKALRT) are Cytoplasmic-facing. The helical transmembrane segment at 227-247 (VSVLIGSFALSWTPFLITGIV) threads the bilayer. At 248–262 (QVACQECHLYLVLER) the chain is on the extracellular side. A helical membrane pass occupies residues 263 to 283 (YLWLLGVGNSLLNPLIYAYWQ). The Cytoplasmic segment spans residues 284 to 335 (KEVRLQLYHMALGVKKVLTSFLLFLSARNCGPERPRESSCHIVTISSSEFDG).

The protein belongs to the G-protein coupled receptor 1 family. As to expression, predominantly expressed in the pancreas, especially in the islets.

The protein localises to the cell membrane. Its function is as follows. Receptor for the endogenous fatty-acid ethanolamide oleoylethanolamide (OEA) and lysophosphatidylcholine (LPC). Functions as a glucose-dependent insulinotropic receptor. The activity of this receptor is mediated by G proteins which activate adenylate cyclase. Seems to act through a G(s) mediated pathway. This is Glucose-dependent insulinotropic receptor (GPR119) from Homo sapiens (Human).